The following is a 446-amino-acid chain: Methionine aminopeptidase 2-1 (446 aa).

The tract at residues methionine 1–phenylalanine 88 is disordered. Acidic residues predominate over residues glutamate 32 to glycine 44. Residues alanine 57 to glycine 72 are compositionally biased toward basic residues. A substrate-binding site is contributed by histidine 196. Aspartate 216, aspartate 227, and histidine 296 together coordinate a divalent metal cation. Histidine 304 contacts substrate. A divalent metal cation is bound by residues glutamate 332 and glutamate 427.

Belongs to the peptidase M24A family. Methionine aminopeptidase eukaryotic type 2 subfamily. The cofactor is Co(2+). Requires Zn(2+) as cofactor. It depends on Mn(2+) as a cofactor. Fe(2+) is required as a cofactor.

The protein localises to the cytoplasm. The enzyme catalyses Release of N-terminal amino acids, preferentially methionine, from peptides and arylamides.. Its function is as follows. Cotranslationally removes the N-terminal methionine from nascent proteins. The N-terminal methionine is often cleaved when the second residue in the primary sequence is small and uncharged (Met-Ala-, Cys, Gly, Pro, Ser, Thr, or Val). The polypeptide is Methionine aminopeptidase 2-1 (Blastomyces gilchristii (strain SLH14081) (Blastomyces dermatitidis)).